The sequence spans 452 residues: tRNA modification GTPase MnmE (452 aa).

Arg-21, Glu-82, and Arg-121 together coordinate (6S)-5-formyl-5,6,7,8-tetrahydrofolate. The 157-residue stretch at 217–373 (GINTTIIGKP…LENKIIEMFN (157 aa)) folds into the TrmE-type G domain. Asn-227 contacts K(+). Residues 227 to 232 (NVGKSS), 246 to 252 (TDIPGTT), and 271 to 274 (DTAG) each bind GTP. Ser-231 contacts Mg(2+). Positions 246, 248, and 251 each coordinate K(+). Thr-252 lines the Mg(2+) pocket. Lys-452 is a (6S)-5-formyl-5,6,7,8-tetrahydrofolate binding site.

This sequence belongs to the TRAFAC class TrmE-Era-EngA-EngB-Septin-like GTPase superfamily. TrmE GTPase family. As to quaternary structure, homodimer. Heterotetramer of two MnmE and two MnmG subunits. Requires K(+) as cofactor.

Its subcellular location is the cytoplasm. Exhibits a very high intrinsic GTPase hydrolysis rate. Involved in the addition of a carboxymethylaminomethyl (cmnm) group at the wobble position (U34) of certain tRNAs, forming tRNA-cmnm(5)s(2)U34. The protein is tRNA modification GTPase MnmE of Finegoldia magna (strain ATCC 29328 / DSM 20472 / WAL 2508) (Peptostreptococcus magnus).